Reading from the N-terminus, the 665-residue chain is MEPRVVKPPGQDLVVERLKSRYGLGGSCPDEYDFSNFDQSKCKRRTLTSPGDLDIYSGDKVGSSLKYSDESKHCRTPLCSLFKRVNVNCLDDELDSFHDLKKRETEEELIENDYRVSTSKITKQSFKDIEKVALPTNTTSSRPRTECCSDAGDSPLKLVSYPKSRASDKRSLLPRQISQIYDELFQIHLKLQCETAAQQKFAEELQKRERFLLEREQLLFRHEDALSKIKGVEEEVLTRFQIMKEQHDAEVEHLTEVLKEKNKETKRLRSSFDALKELNDTLKKQLNEASEENRKMDIQAKRVQARLDNLQRKYEFMTIQRLKGSSHAVHEMKSLKQEKAPVSKTYKVPLNGQVYELLTVFMDWISDHHLSKVKHEESGMDGKKPQLKFASQRNDIQEKCVKLLPLMTEQLQWMPFVNTKLHEPFVKFIYWSLRQLDAGAQHSTMTSTLRRLGEDIFKGVVTKGIQDSSPQHSVENKPKTAAFFKSSNLPLRFLSTLIVLKTVTQADYLAQAFNSLCLDLKTEEGKTLFLEYQAVPVILSHLRISSKGLLSNVIDSLLQMTVESKSLQPFLEACSNSSFFRTCSVLLRAPKLDLQILEKLSTILQKLSKIKSNKKLFELFTIHLMLQEIQRTTNPEHAFLCINLNSTLFNLGLTKCNSLVSSASH.

Threonine 48 bears the Phosphothreonine mark. A Phosphoserine modification is found at serine 49. The stretch at 198–323 forms a coiled coil; that stretch reads QQKFAEELQK…YEFMTIQRLK (126 aa). Serine 469 is subject to Phosphoserine.

This chain is Coiled-coil domain-containing protein 138 (CCDC138), found in Macaca fascicularis (Crab-eating macaque).